We begin with the raw amino-acid sequence, 522 residues long: Protein nucleotidyltransferase YdiU (522 aa).

Positions 109, 111, 112, 132, 144, 145, 195, and 202 each coordinate ATP. Aspartate 271 serves as the catalytic Proton acceptor. 2 residues coordinate Mg(2+): asparagine 272 and aspartate 281. ATP is bound at residue aspartate 281.

It belongs to the SELO family. Requires Mg(2+) as cofactor. It depends on Mn(2+) as a cofactor.

It catalyses the reaction L-seryl-[protein] + ATP = 3-O-(5'-adenylyl)-L-seryl-[protein] + diphosphate. It carries out the reaction L-threonyl-[protein] + ATP = 3-O-(5'-adenylyl)-L-threonyl-[protein] + diphosphate. The catalysed reaction is L-tyrosyl-[protein] + ATP = O-(5'-adenylyl)-L-tyrosyl-[protein] + diphosphate. The enzyme catalyses L-histidyl-[protein] + UTP = N(tele)-(5'-uridylyl)-L-histidyl-[protein] + diphosphate. It catalyses the reaction L-seryl-[protein] + UTP = O-(5'-uridylyl)-L-seryl-[protein] + diphosphate. It carries out the reaction L-tyrosyl-[protein] + UTP = O-(5'-uridylyl)-L-tyrosyl-[protein] + diphosphate. Nucleotidyltransferase involved in the post-translational modification of proteins. It can catalyze the addition of adenosine monophosphate (AMP) or uridine monophosphate (UMP) to a protein, resulting in modifications known as AMPylation and UMPylation. The sequence is that of Protein nucleotidyltransferase YdiU from Burkholderia ambifaria (strain ATCC BAA-244 / DSM 16087 / CCUG 44356 / LMG 19182 / AMMD) (Burkholderia cepacia (strain AMMD)).